Here is a 250-residue protein sequence, read N- to C-terminus: Short-chain dehydrogenase RED3 (250 aa).

4 residues coordinate NADP(+): isoleucine 16, serine 35, glutamate 63, and asparagine 91. Catalysis depends on proton donor residues serine 145 and tyrosine 164. NADP(+) contacts are provided by tyrosine 164, lysine 168, valine 195, and serine 197. Lysine 168 functions as the Lowers pKa of active site Tyr in the catalytic mechanism.

Belongs to the short-chain dehydrogenases/reductases (SDR) family.

The protein operates within polyketide biosynthesis. Short-chain dehydrogenase; part of the gene cluster that mediates the biosynthesis of pyriculol and pyriculariol, two heptaketides that induce lesion formation upon application on rice leaves but are dispensable for pathogenicity. The highly reducing polyketide synthase synthesizes the heptaketide backbone of pyriculol and pyriculariol. Pyriculol and pyriculariol contain several hydroxyl moieties and double bonds, so it can be assumed that several reduction steps occur during biosynthesis. These reactions could be executed by PKS19 itself or partly by the tailoring enzymes OXR1, OXR2, RED1, RED2 or RED3, identified within the cluster. The FAD-linked oxidoreductase OXR1 is the only tailoring enzyme for which the function has been determined yet, and is involved in the oxidation of dihydropyriculol and dihydropyriculariol into pyriculol and pyriculariol, respectively. The sequence is that of Short-chain dehydrogenase RED3 from Pyricularia oryzae (strain 70-15 / ATCC MYA-4617 / FGSC 8958) (Rice blast fungus).